Consider the following 388-residue polypeptide: Lipid-A-disaccharide synthase (388 aa).

It belongs to the LpxB family.

The catalysed reaction is a lipid X + a UDP-2-N,3-O-bis[(3R)-3-hydroxyacyl]-alpha-D-glucosamine = a lipid A disaccharide + UDP + H(+). Its pathway is bacterial outer membrane biogenesis; LPS lipid A biosynthesis. Its function is as follows. Condensation of UDP-2,3-diacylglucosamine and 2,3-diacylglucosamine-1-phosphate to form lipid A disaccharide, a precursor of lipid A, a phosphorylated glycolipid that anchors the lipopolysaccharide to the outer membrane of the cell. The protein is Lipid-A-disaccharide synthase of Burkholderia mallei (strain ATCC 23344).